A 61-amino-acid chain; its full sequence is Small ribosomal subunit protein uS14 (61 aa).

The Zn(2+) site is built by cysteine 24, cysteine 27, cysteine 40, and cysteine 43.

This sequence belongs to the universal ribosomal protein uS14 family. Zinc-binding uS14 subfamily. In terms of assembly, part of the 30S ribosomal subunit. Contacts proteins S3 and S10. The cofactor is Zn(2+).

Functionally, binds 16S rRNA, required for the assembly of 30S particles and may also be responsible for determining the conformation of the 16S rRNA at the A site. The chain is Small ribosomal subunit protein uS14 from Sulfurimonas denitrificans (strain ATCC 33889 / DSM 1251) (Thiomicrospira denitrificans (strain ATCC 33889 / DSM 1251)).